The sequence spans 277 residues: Radial spoke head protein 9 homolog (277 aa).

Belongs to the flagellar radial spoke RSP9 family. In terms of assembly, component of axonemal radial spoke complexes.

The protein localises to the cytoplasm. The protein resides in the cytoskeleton. It localises to the cilium axoneme. Its subcellular location is the flagellum axoneme. It is found in the cell projection. The protein localises to the kinocilium. In terms of biological role, functions as part of axonemal radial spoke complexes that play an important part in the motility of sperm and cilia. Required for motility of olfactory and neural cilia and for the structural integrity of ciliary axonemes in both 9+0 and 9+2 motile cilia. Essential for both the radial spoke head assembly and the central pair microtubule stability in ependymal motile cilia. This chain is Radial spoke head protein 9 homolog (rsph9), found in Danio rerio (Zebrafish).